A 123-amino-acid polypeptide reads, in one-letter code: Ribosome-binding factor A (123 aa).

Belongs to the RbfA family. Monomer. Binds 30S ribosomal subunits, but not 50S ribosomal subunits or 70S ribosomes.

The protein localises to the cytoplasm. One of several proteins that assist in the late maturation steps of the functional core of the 30S ribosomal subunit. Associates with free 30S ribosomal subunits (but not with 30S subunits that are part of 70S ribosomes or polysomes). Required for efficient processing of 16S rRNA. May interact with the 5'-terminal helix region of 16S rRNA. This chain is Ribosome-binding factor A, found in Neisseria meningitidis serogroup A / serotype 4A (strain DSM 15465 / Z2491).